Here is a 226-residue protein sequence, read N- to C-terminus: Transmembrane gamma-carboxyglutamic acid protein 4 (226 aa).

A signal peptide spans 1 to 17; the sequence is MFTLLVLLSQLPTVTLG. A propeptide spanning residues 18 to 49 is cleaved from the precursor; it reads FPHCARGPKASKHAGEEVFTSKEEANFFIHRR. Over 50–113 the chain is Extracellular; sequence LLYNRFDLEL…KSDGNREKID (64 aa). In terms of domain architecture, Gla spans 52 to 98; it reads YNRFDLELFTPGNLERECNEELCNYEEAREIFVDEDKTIAFWQEYSA. An intrachain disulfide couples Cys-69 to Cys-74. At Glu-72 the chain carries 4-carboxyglutamate. The helical transmembrane segment at 114 to 134 threads the bilayer; the sequence is VMGLLTGLIAAGVFLVIFGLL. Over 135–226 the chain is Cytoplasmic; the sequence is GYYLCITKCN…FKKSMSLPSH (92 aa). Phosphoserine is present on Ser-163. The LPXY motif; mediates binding to WW domain-containing proteins signature appears at 186–189; sequence LPSY. The short motif at 204 to 207 is the PPXY motif; mediates binding to WW domain-containing proteins element; the sequence is PPPY.

It belongs to the commissureless family. In terms of assembly, interacts (via cytoplasmic domain) with WW domain-containing proteins MAGI1, MAGI3, NEDD4, NEDD4L, WWTR1/TAZ and YAP1. Post-translationally, gamma-carboxyglutamate residues are formed by vitamin K dependent carboxylation. These residues are essential for the binding of calcium. In terms of tissue distribution, widely expressed with highest levels in kidney.

It is found in the endoplasmic reticulum-Golgi intermediate compartment membrane. Its subcellular location is the cell membrane. Its function is as follows. May control axon guidance across the CNS. Prevents the delivery of ROBO1 at the cell surface and down-regulates its expression. This chain is Transmembrane gamma-carboxyglutamic acid protein 4, found in Homo sapiens (Human).